Consider the following 322-residue polypeptide: Ferredoxin--NADP reductase (322 aa).

FAD is bound by residues Asp34, Gln42, Tyr47, Val87, Phe120, Asp279, and Thr320.

The protein belongs to the ferredoxin--NADP reductase type 2 family. In terms of assembly, homodimer. FAD is required as a cofactor.

It carries out the reaction 2 reduced [2Fe-2S]-[ferredoxin] + NADP(+) + H(+) = 2 oxidized [2Fe-2S]-[ferredoxin] + NADPH. The sequence is that of Ferredoxin--NADP reductase from Streptococcus sanguinis (strain SK36).